A 276-amino-acid polypeptide reads, in one-letter code: NADPH-dependent 7-cyano-7-deazaguanine reductase (276 aa).

83 to 85 (IES) contributes to the substrate binding site. 85 to 86 (SK) is a binding site for NADPH. Cys-184 (thioimide intermediate) is an active-site residue. The Proton donor role is filled by Asp-191. 223–224 (HE) is a binding site for substrate. Position 252–253 (252–253 (RG)) interacts with NADPH.

The protein belongs to the GTP cyclohydrolase I family. QueF type 2 subfamily. As to quaternary structure, homodimer.

The protein localises to the cytoplasm. It catalyses the reaction 7-aminomethyl-7-carbaguanine + 2 NADP(+) = 7-cyano-7-deazaguanine + 2 NADPH + 3 H(+). It functions in the pathway tRNA modification; tRNA-queuosine biosynthesis. In terms of biological role, catalyzes the NADPH-dependent reduction of 7-cyano-7-deazaguanine (preQ0) to 7-aminomethyl-7-deazaguanine (preQ1). This chain is NADPH-dependent 7-cyano-7-deazaguanine reductase, found in Ectopseudomonas mendocina (strain ymp) (Pseudomonas mendocina).